The primary structure comprises 103 residues: Co-chaperonin GroES (103 aa).

The protein belongs to the GroES chaperonin family. In terms of assembly, heptamer of 7 subunits arranged in a ring. Interacts with the chaperonin GroEL.

It is found in the cytoplasm. Its function is as follows. Together with the chaperonin GroEL, plays an essential role in assisting protein folding. The GroEL-GroES system forms a nano-cage that allows encapsulation of the non-native substrate proteins and provides a physical environment optimized to promote and accelerate protein folding. GroES binds to the apical surface of the GroEL ring, thereby capping the opening of the GroEL channel. The polypeptide is Co-chaperonin GroES (Picosynechococcus sp. (strain ATCC 27264 / PCC 7002 / PR-6) (Agmenellum quadruplicatum)).